A 133-amino-acid polypeptide reads, in one-letter code: Ribonuclease P protein component (133 aa).

Belongs to the RnpA family. Consists of a catalytic RNA component (M1 or rnpB) and a protein subunit.

The enzyme catalyses Endonucleolytic cleavage of RNA, removing 5'-extranucleotides from tRNA precursor.. RNaseP catalyzes the removal of the 5'-leader sequence from pre-tRNA to produce the mature 5'-terminus. It can also cleave other RNA substrates such as 4.5S RNA. The protein component plays an auxiliary but essential role in vivo by binding to the 5'-leader sequence and broadening the substrate specificity of the ribozyme. The polypeptide is Ribonuclease P protein component (Pseudomonas fluorescens (strain Pf0-1)).